Reading from the N-terminus, the 278-residue chain is Large ribosomal subunit protein uL2c (278 aa).

Residues 224-267 (VVMNPVDHPHGGGEGRAPIGRKKPLTPWGHTALGGRSRKNHKYS) are disordered.

It belongs to the universal ribosomal protein uL2 family. In terms of assembly, part of the 50S ribosomal subunit.

The protein localises to the plastid. It localises to the chloroplast. The polypeptide is Large ribosomal subunit protein uL2c (rpl2) (Huperzia lucidula (Shining clubmoss)).